The primary structure comprises 417 residues: Sulfate adenylyltransferase (417 aa).

Residues 1 to 10 (MTSITANQKP) show a composition bias toward polar residues. Positions 1-20 (MTSITANQKPSKLVPPHGSP) are disordered.

The protein belongs to the sulfate adenylyltransferase family.

It carries out the reaction sulfate + ATP + H(+) = adenosine 5'-phosphosulfate + diphosphate. It participates in sulfur metabolism; hydrogen sulfide biosynthesis; sulfite from sulfate: step 1/3. The polypeptide is Sulfate adenylyltransferase (Psychrobacter arcticus (strain DSM 17307 / VKM B-2377 / 273-4)).